The chain runs to 362 residues: Ribosomal RNA large subunit methyltransferase M (362 aa).

S-adenosyl-L-methionine is bound by residues Ser187, 220-223, Asp239, Asp259, and Asp276; that span reads CPGG. Lys305 functions as the Proton acceptor in the catalytic mechanism.

It belongs to the class I-like SAM-binding methyltransferase superfamily. RNA methyltransferase RlmE family. RlmM subfamily. Monomer.

The protein resides in the cytoplasm. It carries out the reaction cytidine(2498) in 23S rRNA + S-adenosyl-L-methionine = 2'-O-methylcytidine(2498) in 23S rRNA + S-adenosyl-L-homocysteine + H(+). Functionally, catalyzes the 2'-O-methylation at nucleotide C2498 in 23S rRNA. The protein is Ribosomal RNA large subunit methyltransferase M of Shewanella frigidimarina (strain NCIMB 400).